Reading from the N-terminus, the 537-residue chain is Exoglucanase 1 (537 aa).

A signal peptide spans methionine 1 to alanine 18. Residues leucine 19–glycine 453 are catalytic. The N-linked (GlcNAc...) asparagine glycan is linked to asparagine 136. Catalysis depends on glutamate 235, which acts as the Nucleophile. Glutamate 240 (proton donor) is an active-site residue. Asparagine 414 and asparagine 456 each carry an N-linked (GlcNAc...) asparagine glycan. Residues proline 454–threonine 477 are linker. Residues threonine 458–glycine 502 are compositionally biased toward low complexity. Residues threonine 458–alanine 503 form a disordered region. A CBM1 domain is found at threonine 501–leucine 537. 2 cysteine pairs are disulfide-bonded: cysteine 509/cysteine 526 and cysteine 520/cysteine 536.

This sequence belongs to the glycosyl hydrolase 7 (cellulase C) family.

The protein resides in the secreted. The catalysed reaction is Hydrolysis of (1-&gt;4)-beta-D-glucosidic linkages in cellulose and cellotetraose, releasing cellobiose from the non-reducing ends of the chains.. The sequence is that of Exoglucanase 1 (cbh1) from Penicillium janthinellum (Penicillium vitale).